A 222-amino-acid chain; its full sequence is Urease accessory protein UreF (222 aa).

This sequence belongs to the UreF family. As to quaternary structure, ureD, UreF and UreG form a complex that acts as a GTP-hydrolysis-dependent molecular chaperone, activating the urease apoprotein by helping to assemble the nickel containing metallocenter of UreC. The UreE protein probably delivers the nickel.

It is found in the cytoplasm. Its function is as follows. Required for maturation of urease via the functional incorporation of the urease nickel metallocenter. The protein is Urease accessory protein UreF of Hahella chejuensis (strain KCTC 2396).